A 1477-amino-acid polypeptide reads, in one-letter code: Alpha-1-inhibitor 3 (1477 aa).

Positions 1–24 (MKKDREAQLCLFSALLAFLPFASL) are cleaved as a signal peptide. Cys48 and Cys86 form a disulfide bridge. Asn55 and Asn247 each carry an N-linked (GlcNAc...) asparagine glycan. 2 cysteine pairs are disulfide-bonded: Cys251-Cys295 and Cys269-Cys283. N-linked (GlcNAc...) asparagine glycans are attached at residues Asn301, Asn321, Asn393, and Asn508. Disulfide bonds link Cys468/Cys563, Cys595/Cys774, and Cys643/Cys678. A bait region (approximate) region spans residues 601-750 (DQSVLLQKPE…TWIWDLVTVN (150 aa)). N-linked (GlcNAc...) asparagine glycans are attached at residues Asn750, Asn777, and Asn872. 4 disulfide bridges follow: Cys850-Cys886, Cys924-Cys1324, Cys1082-Cys1130, and Cys1355-Cys1470. The segment at residues 975–978 (CGEQ) is a cross-link (isoglutamyl cysteine thioester (Cys-Gln)). N-linked (GlcNAc...) asparagine glycosylation is present at Asn994. Asn1143, Asn1314, and Asn1427 each carry an N-linked (GlcNAc...) asparagine glycan.

This sequence belongs to the protease inhibitor I39 (alpha-2-macroglobulin) family. In terms of assembly, monomer.

It localises to the secreted. Its function is as follows. Protease inhibitor with a wide spectrum of protein targets, which attaches through its thioester function. The sequence is that of Alpha-1-inhibitor 3 (A1i3) from Rattus norvegicus (Rat).